The following is a 120-amino-acid chain: UPF0231 protein CKO_03249 (120 aa).

It belongs to the UPF0231 family.

The protein is UPF0231 protein CKO_03249 of Citrobacter koseri (strain ATCC BAA-895 / CDC 4225-83 / SGSC4696).